The primary structure comprises 247 residues: Small ribosomal subunit protein uS2 (247 aa).

Belongs to the universal ribosomal protein uS2 family.

The protein is Small ribosomal subunit protein uS2 of Ralstonia pickettii (strain 12J).